The following is a 475-amino-acid chain: Pregnancy-specific glycoprotein 22 (475 aa).

The signal sequence occupies residues 1–35 (MEVSSELLSNGWTSWQRVLLTASLLTCWLLPITAG). 3 Ig-like V-type domains span residues 44–140 (KLVE…FLQV), 162–260 (PASV…YLQV), and 280–380 (PVPP…QVNV). 3 N-linked (GlcNAc...) asparagine glycosylation sites follow: Asn-103, Asn-110, and Asn-231. The Ig-like C2-type domain maps to 387-471 (PVMRVTDSTV…SKTSLPVRLT (85 aa)). Cysteines 406 and 454 form a disulfide.

Belongs to the immunoglobulin superfamily. CEA family.

The protein resides in the secreted. Functionally, may have an angiogenic function during early placental development. Binds to cell-surface heparan sulfate proteoglycans (HSPGs), and stimulates secretion of the proangiogenic factors VEGFA and TGFB from uterine dendritic cells and natural killer cells. Also induces endothelial tube formation in vitro. The protein is Pregnancy-specific glycoprotein 22 of Mus musculus (Mouse).